The primary structure comprises 579 residues: Small conductance calcium-activated potassium channel protein 2 (579 aa).

Disordered stretches follow at residues 1 to 54 (MSSC…AAAA) and 90 to 115 (TGGG…KKNQ). Over residues 90–103 (TGGGGGGGGSGHGS) the composition is skewed to gly residues. Residues 138–158 (ALIFGMFGIVVMVIETELSWG) traverse the membrane as a helical segment. At Y160 the chain carries Phosphotyrosine. A helical membrane pass occupies residues 168–188 (LALKCLISLSTIILLGLIIVY). Residues 214 to 234 (IFFICLEILVCAIHPIPGNYT) traverse the membrane as a helical segment. A helical membrane pass occupies residues 256 to 276 (IILSIPMFLRLYLIARVMLLH). The chain crosses the membrane as a helical span at residues 305–325 (LMTICPGTVLLVFSISLWIIA). The segment at residues 345 to 365 (FLGAMWLISITFLSIGYGDMV) is an intramembrane region (pore-forming). Residues 374–394 (VCLLTGIMGAGCTALVVAVVA) traverse the membrane as a helical segment. The interval 412-488 (DTQLTKRVKN…LVDLAKTQNI (77 aa)) is calmodulin-binding. The interval 551–579 (VTYNAERSRSSSRRRRSSSTAPPTSSESS) is disordered. Over residues 568–579 (SSTAPPTSSESS) the composition is skewed to low complexity.

The protein belongs to the potassium channel KCNN family. KCa2.2/KCNN2 subfamily. Homodimer. Heteromultimer with KCNN1 and KCNN3. The complex is composed of 4 channel subunits each of which binds to a calmodulin subunit which regulates the channel activity through calcium-binding. Interacts (via N-terminal domain) with MPP2. As to expression, expressed in atrial myocytes (at protein level). Widely expressed.

The protein resides in the membrane. It localises to the cytoplasm. The protein localises to the myofibril. It is found in the sarcomere. Its subcellular location is the z line. The catalysed reaction is K(+)(in) = K(+)(out). With respect to regulation, inhibited by bee venom neurotoxin apamin. Inhibited by UCL 1684 and tetraethylammonium (TEA). Small conductance calcium-activated potassium channel that mediates the voltage-independent transmembrane transfer of potassium across the cell membrane through a constitutive interaction with calmodulin which binds the intracellular calcium allowing its opening. The current is characterized by a voltage-independent activation, an intracellular calcium concentration increase-dependent activation and a single-channel conductance of about 3 picosiemens. Also presents an inwardly rectifying current, thus reducing its already small outward conductance of potassium ions, which is particularly the case when the membrane potential displays positive values, above + 20 mV. The inward rectification could be due to a blockade of the outward current by intracellular divalent cations such as calcium and magnesium and could also be due to an intrinsic property of the channel pore, independent of intracellular divalent ions. There are three positively charged amino acids in the S6 transmembrane domain, close to the pore, that collectively control the conductance and rectification through an electrostatic mechanism. Additionally, electrostatic contributions from these residues also play an important role in determining the intrinsic open probability of the channel in the absence of calcium, affecting the apparent calcium affinity for activation. Forms an heteromeric complex with calmodulin, which is constitutively associated in a calcium-independent manner. Channel opening is triggered when calcium binds the calmodulin resulting in a rotary movement leading to the formation of the dimeric complex to open the gate. Plays a role in the repolarization phase of cardiac action potential. This chain is Small conductance calcium-activated potassium channel protein 2, found in Homo sapiens (Human).